A 337-amino-acid chain; its full sequence is F420-dependent glucose-6-phosphate dehydrogenase (337 aa).

Aspartate 40 provides a ligand contact to coenzyme F420-(gamma-Glu)n. The active-site Proton donor is the histidine 41. Residues threonine 77 and 108 to 109 (SG) contribute to the coenzyme F420-(gamma-Glu)n site. Glutamate 110 acts as the Proton acceptor in catalysis. Residues asparagine 113, 178–179 (GG), and 181–182 (VV) each bind coenzyme F420-(gamma-Glu)n. Threonine 196, lysine 199, lysine 260, and arginine 284 together coordinate substrate.

Belongs to the F420-dependent glucose-6-phosphate dehydrogenase family. Homodimer.

The enzyme catalyses oxidized coenzyme F420-(gamma-L-Glu)(n) + D-glucose 6-phosphate + H(+) = 6-phospho-D-glucono-1,5-lactone + reduced coenzyme F420-(gamma-L-Glu)(n). Its function is as follows. Catalyzes the coenzyme F420-dependent oxidation of glucose 6-phosphate (G6P) to 6-phosphogluconolactone. The polypeptide is F420-dependent glucose-6-phosphate dehydrogenase (Rhodococcus erythropolis (strain PR4 / NBRC 100887)).